The following is a 92-amino-acid chain: MGRSLKKGPFVADHLLRKIEALNERNAKEVIKTWSRASTIVPEMIGHTIAVHNGKQHVPVYITEQMVGHKLGEFAPTRNFRSHVKGDKKARH.

It belongs to the universal ribosomal protein uS19 family.

Functionally, protein S19 forms a complex with S13 that binds strongly to the 16S ribosomal RNA. This Thermosynechococcus vestitus (strain NIES-2133 / IAM M-273 / BP-1) protein is Small ribosomal subunit protein uS19.